Here is a 289-residue protein sequence, read N- to C-terminus: Beta-lactamase Toho-2 (289 aa).

A signal peptide spans 1–28 (MVTKRVQRMMSAAAACIPLLLGSPTLYA). Catalysis depends on Ser-73, which acts as the Acyl-ester intermediate. 235 to 237 (KTG) contacts substrate.

Belongs to the class-A beta-lactamase family.

The catalysed reaction is a beta-lactam + H2O = a substituted beta-amino acid. With respect to regulation, inhibited 16-fold better by the beta-lactamase inhibitor tazobactam than by clavulanic acid. Functionally, hydrolyzes beta-lactam antibiotics such as penicillin G, carbenicillin, cephaloridine, cefoxitin, cefotaxime, ceftazidime, and aztreonam. Has especially increased relative hydrolysis rates for cephalothin, cephaloridine, cefotaxime and ceftizoxime. The protein is Beta-lactamase Toho-2 (bla) of Escherichia coli.